A 243-amino-acid polypeptide reads, in one-letter code: Probable transcriptional regulatory protein Tbd_2215 (243 aa).

This sequence belongs to the TACO1 family.

The protein resides in the cytoplasm. In Thiobacillus denitrificans (strain ATCC 25259 / T1), this protein is Probable transcriptional regulatory protein Tbd_2215.